A 259-amino-acid polypeptide reads, in one-letter code: Protein-L-isoaspartate O-methyltransferase 1 (259 aa).

Ser109 is an active-site residue.

This sequence belongs to the methyltransferase superfamily. L-isoaspartyl/D-aspartyl protein methyltransferase family.

The protein resides in the cytoplasm. The catalysed reaction is [protein]-L-isoaspartate + S-adenosyl-L-methionine = [protein]-L-isoaspartate alpha-methyl ester + S-adenosyl-L-homocysteine. Functionally, catalyzes the methyl esterification of L-isoaspartyl residues in peptides and proteins that result from spontaneous decomposition of normal L-aspartyl and L-asparaginyl residues. It plays a role in the repair and/or degradation of damaged proteins. The sequence is that of Protein-L-isoaspartate O-methyltransferase 1 from Cupriavidus necator (strain ATCC 17699 / DSM 428 / KCTC 22496 / NCIMB 10442 / H16 / Stanier 337) (Ralstonia eutropha).